A 281-amino-acid polypeptide reads, in one-letter code: uncharacterized protein (281 aa).

Residues 1–23 (MKLYRSLKAALLPGICTSILLAS) form the signal peptide. Cys-24 is lipidated: N-palmitoyl cysteine. Cys-24 carries the S-diacylglycerol cysteine lipid modification. The tract at residues 145–165 (HHDHNHMHNHEHEHEEHHDEE) is disordered. The segment covering 150 to 161 (HMHNHEHEHEEH) has biased composition (basic and acidic residues).

Its subcellular location is the cell membrane. This is an uncharacterized protein from Mycoplasma genitalium (strain ATCC 33530 / DSM 19775 / NCTC 10195 / G37) (Mycoplasmoides genitalium).